A 340-amino-acid chain; its full sequence is Ferrochelatase (340 aa).

Residues H218 and E298 each contribute to the Fe cation site.

This sequence belongs to the ferrochelatase family.

The protein resides in the cytoplasm. It catalyses the reaction heme b + 2 H(+) = protoporphyrin IX + Fe(2+). The protein operates within porphyrin-containing compound metabolism; protoheme biosynthesis; protoheme from protoporphyrin-IX: step 1/1. Functionally, catalyzes the ferrous insertion into protoporphyrin IX. This is Ferrochelatase from Wolbachia sp. subsp. Brugia malayi (strain TRS).